The sequence spans 125 residues: Large ribosomal subunit protein bL12 (125 aa).

The protein belongs to the bacterial ribosomal protein bL12 family. Homodimer. Part of the ribosomal stalk of the 50S ribosomal subunit. Forms a multimeric L10(L12)X complex, where L10 forms an elongated spine to which 2 to 4 L12 dimers bind in a sequential fashion. Binds GTP-bound translation factors.

Forms part of the ribosomal stalk which helps the ribosome interact with GTP-bound translation factors. Is thus essential for accurate translation. The chain is Large ribosomal subunit protein bL12 from Chlorobium phaeobacteroides (strain DSM 266 / SMG 266 / 2430).